A 515-amino-acid chain; its full sequence is MTVAEQQPQHQGYANPGTPGSVVTFKKRYDNFIGGQWVPPVKGQYFDNASPVDGKVFTQAARSTAEDVELALDAAHRAAPAWGRTSVTERSNILLKIADRMEQNLEMLAVAETWDNGKPVRETLAADLPLAIDHFRYFAGCIRAQEGGLSQIDDSTVAYHFHEPLGVVGQIIPWNFPLLMGVWKLAPALAAGNAVVLKPAEQTPASIMVLMELIADLLPEGVVNVVNGFGLEAGKPLASSPRIAKIAFTGETNTGRLIMGYAADNLIPVTLELGGKSPNIFFDDVMMEDDAFLDKAVEGMVMFALNQGEVCTCPSRALIQESIYDRFMERAVQRVEAITMGHPLDPGTMIGAQASTEQLDKILSYLDIGRAEGAEVLTGGERGQREGLEEGFYVKPTIFKGHNKMRIFQEEIFGPVLAAATFKDEAEALELANDTLYGLGAGLWTRDISRAYRMGRGIQAGRVWTNCYHVYPAHAAFGGYKQSGIGRENHRMMLDHYQQTKNLLVSYSPNKMGFF.

A compositionally biased stretch (polar residues) spans 1–12; the sequence is MTVAEQQPQHQG. Positions 1-20 are disordered; it reads MTVAEQQPQHQGYANPGTPG. 228 to 234 lines the NAD(+) pocket; it reads GFGLEAG. Catalysis depends on residues glutamate 272 and cysteine 311.

It belongs to the aldehyde dehydrogenase family.

The enzyme catalyses an aldehyde + NAD(+) + H2O = a carboxylate + NADH + 2 H(+). The sequence is that of Aldehyde dehydrogenase (aldA) from Deinococcus radiodurans (strain ATCC 13939 / DSM 20539 / JCM 16871 / CCUG 27074 / LMG 4051 / NBRC 15346 / NCIMB 9279 / VKM B-1422 / R1).